We begin with the raw amino-acid sequence, 326 residues long: MSTKIAVLGGGAWGTALAAMAAKGGHESWLYARDAETVVAINKDRRNPCYLGDITLADGIRASTDAAAVVTGADAVLAVIPAQAMRNGLSELGTLIPQASPIVLCAKGIEQNTGRLMSEVVAEILPDHRIAALSGPSFASDVARGLPTAVTVACEDANTADRLAALLSGPAFRCYSTTDLKGVETGGALKNVLAIAAGAAIGRGYGASAQAALVTRGFAELRRIGQAMSARPETIMGLSGLGDLMLTCSSSQSRNYSYGLALGRGEDLTSRPLAEGVATAPIAAELCRKHNISAPIIDAVGALLDGKITIDEAVTALLNRPLKTED.

The NADPH site is built by W13, R33, and K107. Residues K107, G135, and S137 each contribute to the sn-glycerol 3-phosphate site. Position 139 (A139) interacts with NADPH. Sn-glycerol 3-phosphate is bound by residues K190, D243, S253, R254, and N255. Residue K190 is the Proton acceptor of the active site. R254 serves as a coordination point for NADPH. NADPH contacts are provided by L273 and E275.

This sequence belongs to the NAD-dependent glycerol-3-phosphate dehydrogenase family.

The protein resides in the cytoplasm. The catalysed reaction is sn-glycerol 3-phosphate + NAD(+) = dihydroxyacetone phosphate + NADH + H(+). The enzyme catalyses sn-glycerol 3-phosphate + NADP(+) = dihydroxyacetone phosphate + NADPH + H(+). Its pathway is membrane lipid metabolism; glycerophospholipid metabolism. Its function is as follows. Catalyzes the reduction of the glycolytic intermediate dihydroxyacetone phosphate (DHAP) to sn-glycerol 3-phosphate (G3P), the key precursor for phospholipid synthesis. The protein is Glycerol-3-phosphate dehydrogenase [NAD(P)+] of Brucella ovis (strain ATCC 25840 / 63/290 / NCTC 10512).